The primary structure comprises 192 residues: Segregation and condensation protein B (192 aa).

It belongs to the ScpB family. Homodimer. Homodimerization may be required to stabilize the binding of ScpA to the Smc head domains. Component of a cohesin-like complex composed of ScpA, ScpB and the Smc homodimer, in which ScpA and ScpB bind to the head domain of Smc. The presence of the three proteins is required for the association of the complex with DNA.

It is found in the cytoplasm. Participates in chromosomal partition during cell division. May act via the formation of a condensin-like complex containing Smc and ScpA that pull DNA away from mid-cell into both cell halves. The sequence is that of Segregation and condensation protein B from Mycoplasma mobile (strain ATCC 43663 / 163K / NCTC 11711) (Mesomycoplasma mobile).